The primary structure comprises 677 residues: Methionine--tRNA ligase (677 aa).

A 'HIGH' region motif is present at residues proline 15–histidine 25. Residues cysteine 146, cysteine 149, cysteine 159, and cysteine 162 each coordinate Zn(2+). The short motif at lysine 333–serine 337 is the 'KMSKS' region element. Lysine 336 contributes to the ATP binding site. Residues aspartate 575–lysine 677 form the tRNA-binding domain.

It belongs to the class-I aminoacyl-tRNA synthetase family. MetG type 1 subfamily. As to quaternary structure, homodimer. Zn(2+) serves as cofactor.

The protein resides in the cytoplasm. It catalyses the reaction tRNA(Met) + L-methionine + ATP = L-methionyl-tRNA(Met) + AMP + diphosphate. Its function is as follows. Is required not only for elongation of protein synthesis but also for the initiation of all mRNA translation through initiator tRNA(fMet) aminoacylation. This chain is Methionine--tRNA ligase, found in Escherichia coli (strain UTI89 / UPEC).